The primary structure comprises 394 residues: Growth-regulating factor 4 (394 aa).

The QLQ domain maps to 64–99 (PFTAAQYEELEQQALIYKYLVAGVPVPPDLVLPIRR). A WRC domain is found at 125 to 169 (DPEPGRCRRTDGKKWRCSKEAAPDSKYCERHMHRGRNRSRKPVET). Short sequence motifs (bipartite nuclear localization signal) lie at residues 130–140 (RCRRTDGKKWR) and 158–165 (RGRNRSRK). A disordered region spans residues 156-180 (MHRGRNRSRKPVETQLVAQSQPPSS). A compositionally biased stretch (low complexity) spans 170–180 (QLVAQSQPPSS).

The protein belongs to the GRF family. As to quaternary structure, interacts with GIF1. Interacts with GSK2. In terms of tissue distribution, expressed in stems. Expressed in panicles.

Its subcellular location is the nucleus. Its activity is regulated as follows. Transactivation activity is repressed by GSK2. Functionally, transcription activator that plays a role in the regulation of meristematic function in leaves, stems and inflorescences. Transcription activator that plays a regulatory role in grain development. Positively regulates grain size by promoting cell division and expansion, leading to increased grain length and width. Positively regulates the expression of genes promoting cell proliferation. Activates the expression of expansin genes to promote cell expansion and grain size. May promote grain size by activating brassinosteroid responses. Component of a network formed by the microRNA396 (miRNA396), the GRFs and their interacting factors (GIFs) acting in the regulation of meristem function, at least partially through the control of cell proliferation. Component of the miRNA396c-GRF4-GIF1 regulatory module that plays an important role in grain size determination. The sequence is that of Growth-regulating factor 4 from Oryza sativa subsp. japonica (Rice).